A 70-amino-acid chain; its full sequence is Probable protein transport protein Sec61 subunit gamma (70 aa).

The Cytoplasmic segment spans residues 1–33 (MADNADDLFQIPKNFYKEGSHFIKRCVKPDRKE). The chain crosses the membrane as a helical span at residues 34 to 62 (FLSISKAVATGFVLMGLIGYIIKLIHIPI). Over 63-70 (NKVLVGGA) the chain is Extracellular.

The protein belongs to the SecE/SEC61-gamma family. In terms of assembly, heterotrimeric complex composed of SEC61-alpha, SEC61-beta and SEC61-gamma.

It localises to the endoplasmic reticulum membrane. Functionally, necessary for protein translocation in the endoplasmic reticulum. This chain is Probable protein transport protein Sec61 subunit gamma (sss1), found in Schizosaccharomyces pombe (strain 972 / ATCC 24843) (Fission yeast).